The sequence spans 874 residues: Alanine--tRNA ligase (874 aa).

Zn(2+) is bound by residues His-563, His-567, Cys-665, and His-669.

This sequence belongs to the class-II aminoacyl-tRNA synthetase family. It depends on Zn(2+) as a cofactor.

It localises to the cytoplasm. It carries out the reaction tRNA(Ala) + L-alanine + ATP = L-alanyl-tRNA(Ala) + AMP + diphosphate. In terms of biological role, catalyzes the attachment of alanine to tRNA(Ala) in a two-step reaction: alanine is first activated by ATP to form Ala-AMP and then transferred to the acceptor end of tRNA(Ala). Also edits incorrectly charged Ser-tRNA(Ala) and Gly-tRNA(Ala) via its editing domain. This chain is Alanine--tRNA ligase, found in Haemophilus influenzae (strain ATCC 51907 / DSM 11121 / KW20 / Rd).